Here is a 123-residue protein sequence, read N- to C-terminus: Small ribosomal subunit protein uS12 (123 aa).

A disordered region spans residues 1–24 (MPTINQLVRKGRTPQKVKSKVPAM). A compositionally biased stretch (basic residues) spans 9–19 (RKGRTPQKVKS). Residue Asp-89 is modified to 3-methylthioaspartic acid.

This sequence belongs to the universal ribosomal protein uS12 family. Part of the 30S ribosomal subunit. Contacts proteins S8 and S17. May interact with IF1 in the 30S initiation complex.

Functionally, with S4 and S5 plays an important role in translational accuracy. Its function is as follows. Interacts with and stabilizes bases of the 16S rRNA that are involved in tRNA selection in the A site and with the mRNA backbone. Located at the interface of the 30S and 50S subunits, it traverses the body of the 30S subunit contacting proteins on the other side and probably holding the rRNA structure together. The combined cluster of proteins S8, S12 and S17 appears to hold together the shoulder and platform of the 30S subunit. The sequence is that of Small ribosomal subunit protein uS12 from Sphingopyxis alaskensis (strain DSM 13593 / LMG 18877 / RB2256) (Sphingomonas alaskensis).